The following is a 177-amino-acid chain: RNA pyrophosphohydrolase (177 aa).

The region spanning 6–149 (GYRPNVGIVI…KRDVYRRVMK (144 aa)) is the Nudix hydrolase domain. The Nudix box signature appears at 38–59 (GGINPGESPEQAMYRELFEEVG).

The protein belongs to the Nudix hydrolase family. RppH subfamily. A divalent metal cation is required as a cofactor.

Functionally, accelerates the degradation of transcripts by removing pyrophosphate from the 5'-end of triphosphorylated RNA, leading to a more labile monophosphorylated state that can stimulate subsequent ribonuclease cleavage. This Pectobacterium atrosepticum (strain SCRI 1043 / ATCC BAA-672) (Erwinia carotovora subsp. atroseptica) protein is RNA pyrophosphohydrolase.